We begin with the raw amino-acid sequence, 235 residues long: Dual specificity protein phosphatase 15 (235 aa).

Residue Gly-2 is the site of N-myristoyl glycine attachment. In terms of domain architecture, Tyrosine-protein phosphatase spans 4–144; sequence GMTKVLPGLY…LEEFGWANSQ (141 aa). Residue Cys-88 is the Phosphocysteine intermediate of the active site. Residues 183-193 are compositionally biased toward low complexity; it reads AASATTASSAA. The tract at residues 183-212 is disordered; sequence AASATTASSAAEGTLQRLVPRSPRDSHQPL.

The protein belongs to the protein-tyrosine phosphatase family. Non-receptor class dual specificity subfamily. As to expression, isoform 1 is expressed in testis; predominantly in developing spermatocytes (at protein level). Isoform 2 is highly expressed in testis. Expressed in spinal cord and specifically in oligodendroglial cells. Expressed in embryonic brain cortex; down-regulated in mice with experimental autoimmune encephalomyelitis (EAE).

It is found in the cell membrane. It catalyses the reaction O-phospho-L-tyrosyl-[protein] + H2O = L-tyrosyl-[protein] + phosphate. It carries out the reaction O-phospho-L-seryl-[protein] + H2O = L-seryl-[protein] + phosphate. The catalysed reaction is O-phospho-L-threonyl-[protein] + H2O = L-threonyl-[protein] + phosphate. May dephosphorylate MAPK13, ATF2, ERBB3, PDGFRB and SNX6. In terms of biological role, may play a role in the regulation of oligodendrocyte differentiation. May play a role in the regulation of myelin formation. Involved in the regulation of Erk1/2 phosphorylation in Schwann cells; the signaling may be linked to the regulation of myelination. This Mus musculus (Mouse) protein is Dual specificity protein phosphatase 15.